Reading from the N-terminus, the 108-residue chain is UPF0060 membrane protein amb3269 (108 aa).

4 helical membrane passes run 4 to 24, 31 to 51, 59 to 79, and 85 to 105; these read IPTY…FWAW, PLWL…LTRI, AYAA…WAVE, and RWDT…IFGP.

This sequence belongs to the UPF0060 family.

It is found in the cell inner membrane. The chain is UPF0060 membrane protein amb3269 from Paramagnetospirillum magneticum (strain ATCC 700264 / AMB-1) (Magnetospirillum magneticum).